A 501-amino-acid chain; its full sequence is Beta-secretase 1 (501 aa).

A signal peptide spans 1–21 (MAPALHWLLLWVGSGMLPAQG). The propeptide occupies 22–45 (THLGIRLPLRSGLAGPPLGLRLPR). Topologically, residues 22-457 (THLGIRLPLR…PQTDESTLMT (436 aa)) are extracellular. The tract at residues 39–58 (LGLRLPRETDEESEEPGRRG) is disordered. Positions 75–416 (YYVEMTVGSP…DRARKRIGFA (342 aa)) constitute a Peptidase A1 domain. Residue D93 is part of the active site. K126 carries the post-translational modification N6-acetyllysine. N153, N172, and N223 each carry an N-linked (GlcNAc...) asparagine glycan. Intrachain disulfides connect C216/C420, C278/C443, and C330/C380. N6-acetyllysine occurs at positions 275, 279, and 285. D289 is an active-site residue. Residues K299, K300, and K307 each carry the N6-acetyllysine modification. N354 carries an N-linked (GlcNAc...) asparagine glycan. The chain crosses the membrane as a helical span at residues 458–478 (IAYVMAAICALFMLPLCLMVC). Residues C474, C478, C482, and C485 are each lipidated (S-palmitoyl cysteine). Over 479 to 501 (QWRCLRCLRHQHDDFADDISLLK) the chain is Cytoplasmic. Residues 479–501 (QWRCLRCLRHQHDDFADDISLLK) form an interaction with RTN3 region. The DXXLL motif lies at 496–500 (DISLL). S498 carries the post-translational modification Phosphoserine. Residue K501 forms a Glycyl lysine isopeptide (Lys-Gly) (interchain with G-Cter in ubiquitin) linkage.

It belongs to the peptidase A1 family. Monomer. Interacts (via DXXLL motif) with GGA1, GGA2 and GGA3 (via their VHS domain); the interaction highly increases when BACE1 is phosphorylated at Ser-498. Interacts with RTN1; RTN2; RTN3 and RTN4; the interaction leads to inhibition of amyloid precursor protein processing. Interacts with SNX6. Interacts with PCSK9. Interacts with NAT8 and NAT8B. Interacts with BIN1. Interacts (via extracellular domain) with ADAM10 (via extracellular domain). Interacts with SORL1; this interaction may affect binding with APP and hence reduce APP cleavage. Interacts with NRDC AND NRG1. N-Glycosylated. Addition of a bisecting N-acetylglucosamine by MGAT3 blocks lysosomal targeting, further degradation and is required for maintaining stability under stress conditions. Post-translationally, palmitoylation mediates lipid raft localization. In terms of processing, acetylated in the endoplasmic reticulum at Lys-126, Lys-275, Lys-279, Lys-285, Lys-299, Lys-300 and Lys-307. Acetylation by NAT8 and NAT8B is transient and deacetylation probably occurs in the Golgi. Acetylation regulates the maturation, the transport to the plasma membrane, the stability and the expression of the protein. Ubiquitinated at Lys-501, ubiquitination leads to lysosomal degradation. Monoubiquitinated and 'Lys-63'-linked polyubitinated. Deubiquitnated by USP8; inhibits lysosomal degradation. Post-translationally, phosphorylation at Ser-498 is required for interaction with GGA1 and retrograded transport from endosomal compartments to the trans-Golgi network. Non-phosphorylated BACE1 enters a direct recycling route to the cell surface. Expressed in the brain, specifically in neurons and astrocytes (at protein level).

Its subcellular location is the cell membrane. It is found in the golgi apparatus. The protein localises to the trans-Golgi network. The protein resides in the endoplasmic reticulum. It localises to the endosome. Its subcellular location is the late endosome. It is found in the early endosome. The protein localises to the cell surface. The protein resides in the cytoplasmic vesicle membrane. It localises to the membrane raft. Its subcellular location is the lysosome. It is found in the recycling endosome. The protein localises to the cell projection. The protein resides in the axon. It localises to the dendrite. It carries out the reaction Broad endopeptidase specificity. Cleaves Glu-Val-Asn-Leu-|-Asp-Ala-Glu-Phe in the Swedish variant of Alzheimer's amyloid precursor protein.. With respect to regulation, inhibited by RTN3 and RTN4. In terms of biological role, responsible for the proteolytic processing of the amyloid precursor protein (APP). Cleaves at the N-terminus of the A-beta peptide sequence, between residues 671 and 672 of APP, leads to the generation and extracellular release of beta-cleaved soluble APP, and a corresponding cell-associated C-terminal fragment which is later released by gamma-secretase. Cleaves CHL1. The chain is Beta-secretase 1 from Mus musculus (Mouse).